The primary structure comprises 138 residues: Ribosome maturation factor RimP (138 aa).

Belongs to the RimP family.

It is found in the cytoplasm. In terms of biological role, required for maturation of 30S ribosomal subunits. This chain is Ribosome maturation factor RimP, found in Campylobacter curvus (strain 525.92).